The sequence spans 636 residues: Probable potassium transport system protein Kup (636 aa).

A run of 12 helical transmembrane segments spans residues 22-42 (VGLL…SPLY), 64-84 (ILSL…VMFI), 115-135 (LMVI…MITP), 150-170 (FDGI…ALFL), 182-202 (LFGP…VHGI), 220-240 (FFVV…LALT), 261-281 (WFIL…ALLL), 293-313 (LLAP…ATVI), 351-371 (IYIG…VIGF), 383-403 (VAVT…MLLL), 408-428 (PLLA…FFAA), and 433-453 (IVQG…LMST).

The protein belongs to the HAK/KUP transporter (TC 2.A.72) family.

It localises to the cell inner membrane. The catalysed reaction is K(+)(in) + H(+)(in) = K(+)(out) + H(+)(out). Transport of potassium into the cell. Likely operates as a K(+):H(+) symporter. The polypeptide is Probable potassium transport system protein Kup (Pseudomonas putida (strain ATCC 700007 / DSM 6899 / JCM 31910 / BCRC 17059 / LMG 24140 / F1)).